Consider the following 61-residue polypeptide: Cecropin-D (61 aa).

The N-terminal stretch at 1 to 22 (MKFSKIFVFVFAIVFATASVSA) is a signal peptide. The propeptide at 23–24 (AP) is removed by a dipeptidylpeptidase. Gln-60 is modified (glutamine amide).

It belongs to the cecropin family. Mainly in fat body. Lower in hemocytes. Not expressed in midguts, malpighian tubules and silk glands.

It is found in the secreted. Its function is as follows. Cecropins have lytic and antibacterial activity against several Gram-positive and Gram-negative bacteria. This chain is Cecropin-D (CECD), found in Bombyx mori (Silk moth).